The primary structure comprises 317 residues: Glucose-6-phosphate isomerase, cytosolic 2B (317 aa).

E108 serves as the catalytic Proton donor. Active-site residues include H139 and K264.

It belongs to the GPI family. Homodimer.

The protein localises to the cytoplasm. It carries out the reaction alpha-D-glucose 6-phosphate = beta-D-fructose 6-phosphate. It participates in carbohydrate degradation; glycolysis; D-glyceraldehyde 3-phosphate and glycerone phosphate from D-glucose: step 2/4. In Clarkia lewisii (Farewell-to-spring), this protein is Glucose-6-phosphate isomerase, cytosolic 2B (PGIC2-B).